Reading from the N-terminus, the 338-residue chain is Secretory carrier-associated membrane protein 1 (338 aa).

The segment at methionine 1–methionine 64 is disordered. At serine 2 the chain carries N-acetylserine. Residue serine 2 is modified to Phosphoserine. Over serine 2–leucine 155 the chain is Cytoplasmic. Residue threonine 45 is modified to Phosphothreonine. The chain crosses the membrane as a helical span at residues tryptophan 156–valine 176. Residues aspartate 177–alanine 181 lie on the Lumenal side of the membrane. A helical membrane pass occupies residues valine 182–tryptophan 202. The Cytoplasmic segment spans residues tyrosine 203–phenylalanine 218. Residues phenylalanine 219–phenylalanine 239 traverse the membrane as a helical segment. At histidine 240 to glycine 261 the chain is on the lumenal side. The helical transmembrane segment at isoleucine 262–phenylalanine 282 threads the bilayer. Residues lysine 283–methionine 338 lie on the Cytoplasmic side of the membrane.

This sequence belongs to the SCAMP family. As to quaternary structure, interacts with SYNRG, ITSN1 and SLC9A7.

The protein resides in the golgi apparatus. It is found in the trans-Golgi network membrane. Its subcellular location is the recycling endosome membrane. Functions in post-Golgi recycling pathways. Acts as a recycling carrier to the cell surface. The chain is Secretory carrier-associated membrane protein 1 (Scamp1) from Mus musculus (Mouse).